Here is a 185-residue protein sequence, read N- to C-terminus: Ribosomal RNA small subunit methyltransferase G (185 aa).

S-adenosyl-L-methionine is bound by residues Gly59, Phe64, 110–111 (IQ), and Arg127.

It belongs to the methyltransferase superfamily. RNA methyltransferase RsmG family.

Its subcellular location is the cytoplasm. The catalysed reaction is guanosine(527) in 16S rRNA + S-adenosyl-L-methionine = N(7)-methylguanosine(527) in 16S rRNA + S-adenosyl-L-homocysteine. In terms of biological role, specifically methylates the N7 position of guanine in position 527 of 16S rRNA. This chain is Ribosomal RNA small subunit methyltransferase G, found in Helicobacter hepaticus (strain ATCC 51449 / 3B1).